The chain runs to 714 residues: MRKGVLNPDRDRQIVEHELQETGFSPETEKVKNKNFEEDEEEEDESVEKIFESREVPSWKKQLTVRAFVVSFMLSILFSFIVMKLNLTTGIIPSLNVSAGLLGFFFVKTWTKMLHRSGLLKQPFTRQENTVIQTCVVASSGIAFSGGFGTYLFGMSERIATQSGDVSRGVKDPSLGWIIGFLFVVSFLGLFSVVPLRKIMVIDFKLTYPSGTATAHLINSFHTPQGAKLAKKQVRVLGKFFSLSFFWSFFQWFFTGGENCGFSNFPTFGLKAYQYKFYFDFSATYVGVGMICPYIINISVLLGGILSWGIMWPLIETKKGDWFPDNVPSSSMHGLQAYKVFIAVAIILGDGLYNFCKVLSRTLSGLFVQLRGPTTSISRTSFTLEEDPHASPLSPKQSYDDQRRTRFFLKDQIPTWFAVGGYITIAATSTAILPHMFHQLRWYYILVIYICAPVLAFCNAYGAGLTDWSLASTYGKLAIFTIGAWAGSEHGGMLAGLAACGVMMNIVSTASDLTQDFKTGYLTLSSPKSMFVSQVIGTAMGCVVSPCVFWLFYKAFDDLGLPNTEYPAPFATVYRSMAKLGVEGVASLPRECLVLCYAFFGVAILVNIVKDSLHSNWGRFIPLPMAMAIPFFLGPYFAIDMCVGSLILFIWERVDAAKAEAFGTAVASGLICGDGIWSLPSSVLAIAGVNPPVCMKFLSSATNSKVDNFLKGSI.

The segment at histidine 17–aspartate 44 is disordered. The span at glutamate 27 to phenylalanine 36 shows a compositional bias: basic and acidic residues. 13 helical membrane passes run alanine 67–leucine 87, glycine 90–tryptophan 110, cysteine 135–methionine 155, leucine 175–proline 195, valine 236–glycine 256, isoleucine 295–isoleucine 315, valine 340–serine 360, isoleucine 413–leucine 433, isoleucine 445–leucine 465, leucine 477–leucine 497, phenylalanine 531–leucine 551, leucine 593–leucine 613, and phenylalanine 631–tryptophan 651.

It belongs to the YSL (TC 2.A.67.2) family.

Its subcellular location is the membrane. In terms of biological role, may be involved in the transport of nicotianamine-chelated metals. This Arabidopsis thaliana (Mouse-ear cress) protein is Probable metal-nicotianamine transporter YSL5 (YSL5).